Reading from the N-terminus, the 117-residue chain is Non-specific lipid-transfer protein (117 aa).

Positions 1 to 26 (MASSAFVKFTCALVMCMMVAAPLAEA) are cleaved as a signal peptide. Intrachain disulfides connect Cys-29/Cys-76, Cys-39/Cys-53, Cys-54/Cys-99, and Cys-74/Cys-113.

It belongs to the plant LTP family.

In terms of biological role, plant non-specific lipid-transfer proteins transfer phospholipids as well as galactolipids across membranes. May play a role in wax or cutin deposition in the cell walls of expanding epidermal cells and certain secretory tissues. Also has fungicide activity. The sequence is that of Non-specific lipid-transfer protein (IWF1') from Beta vulgaris (Sugar beet).